A 445-amino-acid chain; its full sequence is Argininosuccinate synthase (445 aa).

ATP is bound by residues 17–25 (AFSGGLDTS) and Ala43. Tyr99 contributes to the L-citrulline binding site. ATP-binding residues include Gly129 and Thr131. L-aspartate is bound by residues Thr131, Asn135, and Asp136. Residue Asn135 participates in L-citrulline binding. ATP is bound at residue Asp136. Positions 139 and 192 each coordinate L-citrulline. Asp194 is an ATP binding site. Positions 201, 203, and 280 each coordinate L-citrulline.

The protein belongs to the argininosuccinate synthase family. Type 2 subfamily. Homotetramer.

It localises to the cytoplasm. It catalyses the reaction L-citrulline + L-aspartate + ATP = 2-(N(omega)-L-arginino)succinate + AMP + diphosphate + H(+). The protein operates within amino-acid biosynthesis; L-arginine biosynthesis; L-arginine from L-ornithine and carbamoyl phosphate: step 2/3. This is Argininosuccinate synthase (argG) from Burkholderia multivorans (strain ATCC 17616 / 249).